The sequence spans 353 residues: Ribosomal RNA large subunit methyltransferase M (353 aa).

S-adenosyl-L-methionine-binding positions include serine 179, 212–215, aspartate 231, aspartate 251, and aspartate 267; that span reads APGG. Lysine 296 (proton acceptor) is an active-site residue.

It belongs to the class I-like SAM-binding methyltransferase superfamily. RNA methyltransferase RlmE family. RlmM subfamily. Monomer.

The protein resides in the cytoplasm. The catalysed reaction is cytidine(2498) in 23S rRNA + S-adenosyl-L-methionine = 2'-O-methylcytidine(2498) in 23S rRNA + S-adenosyl-L-homocysteine + H(+). Its function is as follows. Catalyzes the 2'-O-methylation at nucleotide C2498 in 23S rRNA. This chain is Ribosomal RNA large subunit methyltransferase M, found in Laribacter hongkongensis (strain HLHK9).